The chain runs to 770 residues: Formate acetyltransferase (770 aa).

One can recognise a PFL domain in the interval 5–635 (NEMQKLAWAG…KTGNTPDGRR (631 aa)). Cys419 serves as the catalytic S-acetylcysteine intermediate. Cys420 (cysteine radical intermediate) is an active-site residue. A Glycine radical domain is found at 642 to 770 (PGANPMHGRD…VITRTFTESM (129 aa)). A Glycine radical modification is found at Gly745.

The protein belongs to the glycyl radical enzyme (GRE) family. PFL subfamily. In terms of assembly, homodimer.

Its subcellular location is the cytoplasm. It carries out the reaction formate + acetyl-CoA = pyruvate + CoA. Its pathway is fermentation; pyruvate fermentation; formate from pyruvate: step 1/1. In terms of biological role, catalyzes the conversion of pyruvate to formate and acetyl-CoA. This is Formate acetyltransferase (pflB) from Haemophilus influenzae (strain ATCC 51907 / DSM 11121 / KW20 / Rd).